A 357-amino-acid polypeptide reads, in one-letter code: N-acetyl-gamma-glutamyl-phosphate reductase (357 aa).

Residue Cys-160 is part of the active site.

It belongs to the NAGSA dehydrogenase family. Type 1 subfamily.

It localises to the cytoplasm. The catalysed reaction is N-acetyl-L-glutamate 5-semialdehyde + phosphate + NADP(+) = N-acetyl-L-glutamyl 5-phosphate + NADPH + H(+). The protein operates within amino-acid biosynthesis; L-arginine biosynthesis; N(2)-acetyl-L-ornithine from L-glutamate: step 3/4. Catalyzes the NADPH-dependent reduction of N-acetyl-5-glutamyl phosphate to yield N-acetyl-L-glutamate 5-semialdehyde. The sequence is that of N-acetyl-gamma-glutamyl-phosphate reductase from Parasynechococcus marenigrum (strain WH8102).